We begin with the raw amino-acid sequence, 124 residues long: MIQFMTRLNVADNTGAREVGVIKVLNGSKRRYASVGDIVVVSVKDAIPSGTVKKGQVLFAVIVRTKKGAQRRDGTHLAFDDNACVIIKNREDFAPRGTRIFGPVARELRDKGFNRIVSLASEVL.

Belongs to the universal ribosomal protein uL14 family. As to quaternary structure, part of the 50S ribosomal subunit. Forms a cluster with proteins L3 and L19. In the 70S ribosome, L14 and L19 interact and together make contacts with the 16S rRNA in bridges B5 and B8.

Its function is as follows. Binds to 23S rRNA. Forms part of two intersubunit bridges in the 70S ribosome. The polypeptide is Large ribosomal subunit protein uL14 (Mycoplasmoides gallisepticum (strain R(low / passage 15 / clone 2)) (Mycoplasma gallisepticum)).